Reading from the N-terminus, the 246-residue chain is Pyridoxine 5'-phosphate synthase (246 aa).

Asparagine 12 provides a ligand contact to 3-amino-2-oxopropyl phosphate. 14 to 15 (DH) contributes to the 1-deoxy-D-xylulose 5-phosphate binding site. Arginine 23 is a binding site for 3-amino-2-oxopropyl phosphate. Histidine 48 functions as the Proton acceptor in the catalytic mechanism. 2 residues coordinate 1-deoxy-D-xylulose 5-phosphate: arginine 50 and histidine 55. The active-site Proton acceptor is the glutamate 75. 1-deoxy-D-xylulose 5-phosphate is bound at residue threonine 105. Catalysis depends on histidine 196, which acts as the Proton donor. Residues glycine 197 and 218 to 219 (GH) contribute to the 3-amino-2-oxopropyl phosphate site.

The protein belongs to the PNP synthase family. As to quaternary structure, homooctamer; tetramer of dimers.

The protein localises to the cytoplasm. The enzyme catalyses 3-amino-2-oxopropyl phosphate + 1-deoxy-D-xylulose 5-phosphate = pyridoxine 5'-phosphate + phosphate + 2 H2O + H(+). It participates in cofactor biosynthesis; pyridoxine 5'-phosphate biosynthesis; pyridoxine 5'-phosphate from D-erythrose 4-phosphate: step 5/5. Catalyzes the complicated ring closure reaction between the two acyclic compounds 1-deoxy-D-xylulose-5-phosphate (DXP) and 3-amino-2-oxopropyl phosphate (1-amino-acetone-3-phosphate or AAP) to form pyridoxine 5'-phosphate (PNP) and inorganic phosphate. The sequence is that of Pyridoxine 5'-phosphate synthase from Pseudomonas putida (strain GB-1).